Consider the following 478-residue polypeptide: MSSVKLWLNGASSISLVGSEELENLGFVGKGGFGAVFRARHTAWNLDVAVKIVNSKKISREVKAMVNLRHENVLLLLGVTENLEWDYVYGPALVTGFMENGSLSGLLQPSCPRPWPLLCRLLEEVVLGMCYLHSLNPSLLHRDLKPSNVLLDPELHAKLADFGLSTFQGGSQSGSGSGSRDSGGTLAYLAPELLDNDGKASKASDVYSFGVLVWTVLAGREAEVVDKTSLIRGAVCNRQRRPPLTELPPDSPETPGLEGLKELMTHCWSSEPKDRPSFQDCESKTNNVYILVQDKVDAAVSKVKHYLSQYRSSDTKLSARESSQKGTEVDCPRETIVYEMLDRLHLEEPSGSVPERLTSLTERRGKEASFGHATPAGTSSDTLAGTPQIPHTLPSRGTTPRPAFTETPGPDPQRNQGDGRNSNPWYTWNAPNPMTGLQSIVLNNCSEVQIGQHNCMSVQPRTAFPKKEPAQFGRGRGW.

At serine 2 the chain carries Phosphoserine. The Protein kinase domain maps to 22–290; it reads LENLGFVGKG…CESKTNNVYI (269 aa). ATP-binding positions include 28–36 and lysine 51; that span reads VGKGGFGAV. Residue aspartate 143 is the Proton acceptor of the active site. Serine 165 bears the Phosphoserine mark. The residue at position 185 (threonine 185) is a Phosphothreonine. Serine 201 bears the Phosphoserine; by autocatalysis mark. Threonine 228 is subject to Phosphothreonine. Serine 229 carries the phosphoserine; by autocatalysis modification. Residue threonine 254 is modified to Phosphothreonine. A phosphoserine mark is found at serine 301 and serine 323. The tract at residues 311 to 330 is disordered; the sequence is RSSDTKLSARESSQKGTEVD. Basic and acidic residues predominate over residues 313–330; the sequence is SDTKLSARESSQKGTEVD. Threonine 335 carries the post-translational modification Phosphothreonine. Residues serine 350, serine 369, and serine 380 each carry the phosphoserine modification. The disordered stretch occupies residues 362–429; the sequence is ERRGKEASFG…RNSNPWYTWN (68 aa). Positions 376–385 are enriched in polar residues; it reads AGTSSDTLAG. Residue threonine 392 is modified to Phosphothreonine. A compositionally biased stretch (polar residues) spans 413–429; the sequence is QRNQGDGRNSNPWYTWN. Positions 437 to 461 match the RIP homotypic interaction motif (RHIM) motif; the sequence is LQSIVLNNCSEVQIGQHNCMSVQPR. Position 474 is an omega-N-methylarginine (arginine 474).

It belongs to the protein kinase superfamily. TKL Ser/Thr protein kinase family. In terms of assembly, interacts (via RIP homotypic interaction motif) with RIPK1 (via RIP homotypic interaction motif); this interaction induces RIPK1 phosphorylation and formation of a RIPK1-RIPK3 necrosis-inducing complex. Interacts with MLKL; the interaction is direct and triggers necroptosis. Interacts with ZBP1 (via RIP homotypic interaction motif); interaction with ZBP1 activates RIPK3, triggering necroptosis. Upon TNF-induced necrosis, the RIPK1-RIPK3 dimer further interacts with PGAM5 and MLKL; the formation of this complex leads to PGAM5 phosphorylation and increase in PGAM5 phosphatase activity. Binds TRAF2 and is recruited to the TNFR-1 signaling complex. Interacts with PYGL, GLUL and GLUD1; these interactions result in activation of these metabolic enzymes. Interacts with BIRC2/c-IAP1, BIRC3/c-IAP2 and XIAP/BIRC4. Interacts with ARHGEF2. Interacts with PELI1 (via atypical FHA domain); the phosphorylated form at Thr-185 binds preferentially to PELI1. Interacts with BUB1B, TRAF2 and STUB1. Interacts with CASP6. Component of the AIM2 PANoptosome complex, a multiprotein complex that drives inflammatory cell death (PANoptosis). Post-translationally, RIPK1 and RIPK3 undergo reciprocal auto- and trans-phosphorylation. Autophosphorylated following interaction with ZBP1. Phosphorylation of Ser-201 plays a role in the necroptotic function of RIPK3. Autophosphorylates at Thr-228 and Ser-229 following activation by ZBP1: phosphorylation at these sites is a hallmark of necroptosis and is required for binding MLKL. Phosphorylation at Thr-185 is important for its kinase activity, interaction with PELI1 and for its ability to mediate TNF-induced necroptosis. Polyubiquitinated with 'Lys-48' and 'Lys-63'-linked chains by BIRC2/c-IAP1 and BIRC3/c-IAP2, leading to activation of NF-kappa-B. Ubiquitinated by STUB1 leading to its subsequent proteasome-dependent degradation.

The protein localises to the cytoplasm. The protein resides in the cytosol. It localises to the nucleus. It catalyses the reaction L-seryl-[protein] + ATP = O-phospho-L-seryl-[protein] + ADP + H(+). It carries out the reaction L-threonyl-[protein] + ATP = O-phospho-L-threonyl-[protein] + ADP + H(+). Its activity is regulated as follows. Activity is stimulated by ZBP1, which senses double-stranded Z-RNA structures. RIPK3-dependent necroptosis is inhibited by RIPK1: RIPK1 prevents the ZBP1-induced activation of RIPK3 via FADD-mediated recruitment of CASP8, which cleaves RIPK1 and limits TNF-induced necroptosis. In terms of biological role, serine/threonine-protein kinase that activates necroptosis and apoptosis, two parallel forms of cell death. Necroptosis, a programmed cell death process in response to death-inducing TNF-alpha family members, is triggered by RIPK3 following activation by ZBP1. Activated RIPK3 forms a necrosis-inducing complex and mediates phosphorylation of MLKL, promoting MLKL localization to the plasma membrane and execution of programmed necrosis characterized by calcium influx and plasma membrane damage. In addition to TNF-induced necroptosis, necroptosis can also take place in the nucleus in response to orthomyxoviruses infection: following ZBP1 activation, which senses double-stranded Z-RNA structures, nuclear RIPK3 catalyzes phosphorylation and activation of MLKL, promoting disruption of the nuclear envelope and leakage of cellular DNA into the cytosol. Also regulates apoptosis: apoptosis depends on RIPK1, FADD and CASP8, and is independent of MLKL and RIPK3 kinase activity. Phosphorylates RIPK1: RIPK1 and RIPK3 undergo reciprocal auto- and trans-phosphorylation. In some cell types, also able to restrict viral replication by promoting cell death-independent responses. In response to flavivirus infection in neurons, promotes a cell death-independent pathway that restricts viral replication: together with ZBP1, promotes a death-independent transcriptional program that modifies the cellular metabolism via up-regulation expression of the enzyme ACOD1/IRG1 and production of the metabolite itaconate. Itaconate inhibits the activity of succinate dehydrogenase, generating a metabolic state in neurons that suppresses replication of viral genomes. RIPK3 binds to and enhances the activity of three metabolic enzymes: GLUL, GLUD1, and PYGL. These metabolic enzymes may eventually stimulate the tricarboxylic acid cycle and oxidative phosphorylation, which could result in enhanced ROS production. The sequence is that of Receptor-interacting serine/threonine-protein kinase 3 from Rattus norvegicus (Rat).